We begin with the raw amino-acid sequence, 339 residues long: Arylacetonitrilase (339 aa).

Residues 5–290 (IRVAVTQAEP…EGIVYADLDL (286 aa)) enclose the CN hydrolase domain. The active-site Proton acceptor is the Glu45. Residue Lys126 is part of the active site. Catalysis depends on Cys167, which acts as the Nucleophile.

The protein belongs to the carbon-nitrogen hydrolase superfamily. Nitrilase family.

It carries out the reaction a nitrile + 2 H2O = a carboxylate + NH4(+). The catalysed reaction is 4-chlorophenylacetonitrile + 2 H2O = 4-chlorophenylacetate + NH4(+). Its function is as follows. Nitrilase that hydrolyzes preferentially phenylacetonitrile, (R,S)-mandelonitrile, and 3-indolylacetonitrile. The chain is Arylacetonitrilase from Fusarium vanettenii (strain ATCC MYA-4622 / CBS 123669 / FGSC 9596 / NRRL 45880 / 77-13-4) (Fusarium solani subsp. pisi).